The chain runs to 364 residues: Esculetin O-methyltransferase (364 aa).

Asparagine 132 lines the bergaptol pocket. 6 residues coordinate S-adenosyl-L-homocysteine: glycine 209, aspartate 232, aspartate 252, methionine 253, methionine 265, and lysine 266. Residue histidine 270 participates in bergaptol binding. Residue histidine 270 is the Proton acceptor of the active site.

Belongs to the class I-like SAM-binding methyltransferase superfamily. Cation-independent O-methyltransferase family. COMT subfamily. In terms of assembly, homodimer. Expressed ubiquitously.

It catalyses the reaction bergaptol + S-adenosyl-L-methionine = bergapten + S-adenosyl-L-homocysteine. It carries out the reaction xanthotoxol + S-adenosyl-L-methionine = xanthotoxin + S-adenosyl-L-homocysteine + H(+). The catalysed reaction is esculetin + S-adenosyl-L-methionine = isoscopoletin + S-adenosyl-L-homocysteine + H(+). The enzyme catalyses esculetin + S-adenosyl-L-methionine = scopoletin + S-adenosyl-L-homocysteine + H(+). The protein operates within aromatic compound metabolism. It functions in the pathway secondary metabolite biosynthesis. With respect to regulation, inhibited by zinc Zn(2+), copper Cu(2+) and silver Ag(+) ions. Its function is as follows. O-methyltransferase involved in the biosynthesis of methoxylated coumarins natural products such as isoscopoletin, scopoletin, xanthotoxin and bergapten, photosensitizers used for medical purpose such as treating psoriasis and vitiligo or facilitating resistance to microbial infection and other stresses. Catalyzes the methylation of esculetin, bergaptol and xanthotoxol, but seems inactive on scopoletin and isoscopoletin. The protein is Esculetin O-methyltransferase of Kitagawia praeruptora (Peucedanum praeruptorum).